The sequence spans 321 residues: Taste receptor type 2 member 135 (321 aa).

Residues 1–28 (MGPIMSTGETSTAHTVLGCQITDKTVIT) lie on the Extracellular side of the membrane. The helical transmembrane segment at 29–49 (LFVILVFSCLVAVVGNGFIII) threads the bilayer. Residues 50-75 (ALGMKWLLRRTLSAHNKLLISLAASR) are Cytoplasmic-facing. Residues 76 to 96 (FCLQCVVIGKNIYVFLNPSSF) form a helical membrane-spanning segment. Residues 97-106 (PYNPVIQLLN) lie on the Extracellular side of the membrane. A helical membrane pass occupies residues 107–127 (LMWDFLTAATIWFCSLLGFFY). Residues 128-149 (CVKIATLTHPVFVWLKYRLPGW) lie on the Cytoplasmic side of the membrane. The helical transmembrane segment at 150–170 (VPWMLLSAVGMSSLTSILCFI) threads the bilayer. The Extracellular segment spans residues 171-207 (GNHMIYQNYARRGHQPWNATGNSLRHSLEKFYFISIK). Asparagine 188 carries N-linked (GlcNAc...) asparagine glycosylation. The helical transmembrane segment at 208-228 (IIMWTVPTVIFSIFMSLLLVS) threads the bilayer. Topologically, residues 229-253 (LVRHMKKTLLALSELRDVWAQAHFK) are cytoplasmic. The chain crosses the membrane as a helical span at residues 254–274 (ALLPLLSFIILFISCFLTLVL). Topologically, residues 275-286 (SSASSTPYQEFR) are extracellular. The helical transmembrane segment at 287 to 307 (YWMWQVVIHLCTVIHPIVILL) threads the bilayer. Residues 308–321 (SNPVLRVVMKRGCC) are Cytoplasmic-facing.

Belongs to the G-protein coupled receptor T2R family.

The protein resides in the membrane. In terms of biological role, putative taste receptor which may play a role in the perception of bitterness. In Rattus norvegicus (Rat), this protein is Taste receptor type 2 member 135.